The following is a 131-amino-acid chain: Norrin (131 aa).

The N-terminal stretch at 1 to 24 (MRNHVLAASISMLSLLAIMGDTDS) is a signal peptide. 4 cysteine pairs are disulfide-bonded: Cys37–Cys94, Cys53–Cys108, Cys63–Cys124, and Cys67–Cys126. Positions 37–130 (CMRHHYVDSI…ILSCHCEECS (94 aa)) constitute a CTCK domain.

As to quaternary structure, homodimer; disulfide-linked. Component of a complex, at least composed of TSPAN12, FZD4, LRP5/6 and norrin (NDP). Binds FZD4 with high affinity. Interacts with LRP6 (via Beta-propellers 1 and 2). Expressed in the outer nuclear, inner nuclear and ganglion cell layers of the retina.

The protein resides in the secreted. Its function is as follows. Activates the canonical Wnt signaling pathway through FZD4 and LRP5 coreceptor. Plays a central role in retinal vascularization by acting as a ligand for FZD4 that signals via stabilizing beta-catenin (CTNNB1) and activating LEF/TCF-mediated transcriptional programs. Acts in concert with TSPAN12 to activate FZD4 independently of the Wnt-dependent activation of FZD4, suggesting the existence of a Wnt-independent signaling that also promote accumulation the beta-catenin (CTNNB1). May be involved in a pathway that regulates neural cell differentiation and proliferation. Possible role in neuroectodermal cell-cell interaction. The chain is Norrin (Ndp) from Mus musculus (Mouse).